A 266-amino-acid polypeptide reads, in one-letter code: DNA-directed RNA polymerase subunit Rpo3 (266 aa).

Cys-205, Cys-208, and Cys-211 together coordinate [3Fe-4S] cluster.

This sequence belongs to the archaeal Rpo3/eukaryotic RPB3 RNA polymerase subunit family. Part of the RNA polymerase complex. [3Fe-4S] cluster is required as a cofactor.

Its subcellular location is the cytoplasm. The enzyme catalyses RNA(n) + a ribonucleoside 5'-triphosphate = RNA(n+1) + diphosphate. In terms of biological role, DNA-dependent RNA polymerase (RNAP) catalyzes the transcription of DNA into RNA using the four ribonucleoside triphosphates as substrates. The protein is DNA-directed RNA polymerase subunit Rpo3 of Methanosarcina mazei (strain ATCC BAA-159 / DSM 3647 / Goe1 / Go1 / JCM 11833 / OCM 88) (Methanosarcina frisia).